A 246-amino-acid polypeptide reads, in one-letter code: Carboxy-S-adenosyl-L-methionine synthase (246 aa).

Residues tyrosine 39, 64–66 (GCS), 89–90 (DN), 117–118 (DI), asparagine 132, and arginine 199 contribute to the S-adenosyl-L-methionine site.

Belongs to the class I-like SAM-binding methyltransferase superfamily. Cx-SAM synthase family. As to quaternary structure, homodimer.

The enzyme catalyses prephenate + S-adenosyl-L-methionine = carboxy-S-adenosyl-L-methionine + 3-phenylpyruvate + H2O. Catalyzes the conversion of S-adenosyl-L-methionine (SAM) to carboxy-S-adenosyl-L-methionine (Cx-SAM). The sequence is that of Carboxy-S-adenosyl-L-methionine synthase from Erwinia tasmaniensis (strain DSM 17950 / CFBP 7177 / CIP 109463 / NCPPB 4357 / Et1/99).